The primary structure comprises 342 residues: Methionyl-tRNA formyltransferase (342 aa).

Residue 119 to 122 (SILP) coordinates (6S)-5,6,7,8-tetrahydrofolate.

The protein belongs to the Fmt family.

It catalyses the reaction L-methionyl-tRNA(fMet) + (6R)-10-formyltetrahydrofolate = N-formyl-L-methionyl-tRNA(fMet) + (6S)-5,6,7,8-tetrahydrofolate + H(+). In terms of biological role, attaches a formyl group to the free amino group of methionyl-tRNA(fMet). The formyl group appears to play a dual role in the initiator identity of N-formylmethionyl-tRNA by promoting its recognition by IF2 and preventing the misappropriation of this tRNA by the elongation apparatus. The protein is Methionyl-tRNA formyltransferase of Nostoc sp. (strain PCC 7120 / SAG 25.82 / UTEX 2576).